A 271-amino-acid chain; its full sequence is Formamidopyrimidine-DNA glycosylase (271 aa).

Proline 2 (schiff-base intermediate with DNA) is an active-site residue. Glutamate 3 (proton donor) is an active-site residue. The Proton donor; for beta-elimination activity role is filled by lysine 58. Residues histidine 92, arginine 111, and arginine 152 each coordinate DNA. Residues 237 to 271 (SVYGREGEACKQCGRVLKHATIGQRATVWCGSCQR) form an FPG-type zinc finger. Residue arginine 261 is the Proton donor; for delta-elimination activity of the active site.

The protein belongs to the FPG family. Monomer. Requires Zn(2+) as cofactor.

It catalyses the reaction Hydrolysis of DNA containing ring-opened 7-methylguanine residues, releasing 2,6-diamino-4-hydroxy-5-(N-methyl)formamidopyrimidine.. It carries out the reaction 2'-deoxyribonucleotide-(2'-deoxyribose 5'-phosphate)-2'-deoxyribonucleotide-DNA = a 3'-end 2'-deoxyribonucleotide-(2,3-dehydro-2,3-deoxyribose 5'-phosphate)-DNA + a 5'-end 5'-phospho-2'-deoxyribonucleoside-DNA + H(+). In terms of biological role, involved in base excision repair of DNA damaged by oxidation or by mutagenic agents. Acts as a DNA glycosylase that recognizes and removes damaged bases. Has a preference for oxidized purines, such as 7,8-dihydro-8-oxoguanine (8-oxoG). Has AP (apurinic/apyrimidinic) lyase activity and introduces nicks in the DNA strand. Cleaves the DNA backbone by beta-delta elimination to generate a single-strand break at the site of the removed base with both 3'- and 5'-phosphates. The sequence is that of Formamidopyrimidine-DNA glycosylase from Xanthomonas euvesicatoria pv. vesicatoria (strain 85-10) (Xanthomonas campestris pv. vesicatoria).